Reading from the N-terminus, the 278-residue chain is Checkpoint protein Hus1-like (278 aa).

Belongs to the HUS1 family. As to quaternary structure, component of the 9-1-1 checkpoint clamp complex consisting of Rad9 isoform A, Rad1 and Hus1-like; the interactions with Rad1 and Rad9 are direct. This complex probably also forms with Rad9 isoform B, however 9-1-1 complex containing Rad9 isoform A localizes to the nuclear periphery. In terms of tissue distribution, expressed in ovary.

The protein resides in the cytoplasm. Its subcellular location is the nucleus envelope. Functionally, component of the 9-1-1 checkpoint clamp complex. Involved in both meiotic and somatic DNA damage responses. Essential for activation of the meiotic checkpoint in response to double-strand DNA breaks; required for the S-phase checkpoint but not the G2-M phase checkpoint. Involved in double strand break repair by homologous recombination during meiosis; influences the organization of chromosomal DNA in the meiotic nucleus. The protein is Checkpoint protein Hus1-like of Drosophila melanogaster (Fruit fly).